A 108-amino-acid chain; its full sequence is Putative DNA-directed RNA polymerase subunit 1 inactive homolog (108 aa).

The protein is Putative DNA-directed RNA polymerase subunit 1 inactive homolog of Acanthamoeba polyphaga (Amoeba).